The following is a 466-amino-acid chain: 3-isopropylmalate dehydratase large subunit (466 aa).

Cys347, Cys407, and Cys410 together coordinate [4Fe-4S] cluster.

Belongs to the aconitase/IPM isomerase family. LeuC type 1 subfamily. In terms of assembly, heterodimer of LeuC and LeuD. Requires [4Fe-4S] cluster as cofactor.

The catalysed reaction is (2R,3S)-3-isopropylmalate = (2S)-2-isopropylmalate. It participates in amino-acid biosynthesis; L-leucine biosynthesis; L-leucine from 3-methyl-2-oxobutanoate: step 2/4. In terms of biological role, catalyzes the isomerization between 2-isopropylmalate and 3-isopropylmalate, via the formation of 2-isopropylmaleate. The polypeptide is 3-isopropylmalate dehydratase large subunit (Enterobacter sp. (strain 638)).